Here is a 1174-residue protein sequence, read N- to C-terminus: HEAT repeat-containing protein 6 (1174 aa).

The HEAT 1 repeat unit spans residues 168-207 (NELLGPTGILVNLCDPSQPDPELWREAIHCMANLCLGVPG). 2 disordered regions span residues 304–346 (GRSP…EELK) and 373–392 (LGPQKSPLDPHQGQVGKDHF). The span at 323–335 (SKKKRKAGKQKKG) shows a compositional bias: basic residues. Positions 336 to 346 (HQGEESKEELK) are enriched in basic and acidic residues. HEAT repeat units lie at residues 460 to 498 (GIGSPQSVSLMTIALKDSSPKTRACALQVLSAILDGSKQ), 523 to 560 (SIRELHRCLLLAIVAESSAQTLTQIIKCLANLVSNAPY), and 566 to 603 (GLLTRVWNQIKPYIRNKDVNVRVSSLTLLGAIVSAQVS). The segment at 619–648 (SQNSGSATPSDPESNRKESMLEGGKKNGLH) is disordered. A compositionally biased stretch (basic and acidic residues) spans 631–648 (ESNRKESMLEGGKKNGLH).

The chain is HEAT repeat-containing protein 6 (heatr6) from Xenopus laevis (African clawed frog).